The primary structure comprises 409 residues: TNF receptor-associated factor family protein DDB_G0273435/DDB_G0273505 (409 aa).

Residues 20–59 (CQLCCNLMNESVSCPNGHCLCKGCFHKQIETVKSECPICC) form an RING-type; degenerate zinc finger. 2 consecutive TRAF-type zinc fingers follow at residues 75–145 (KHIN…EIEN) and 145–201 (NHQD…HELS). Residues 221–250 (HQSLLKSTSKQLKQLRSSCEELETKLINND) adopt a coiled-coil conformation. The MATH domain maps to 252 to 380 (SFNGRWIIKQ…NDQLIIKFNI (129 aa)).

It belongs to the TNF receptor-associated factor family. A subfamily.

It is found in the cytoplasm. Its function is as follows. Probable adapter protein and signal transducer that links members of the tumor necrosis factor receptor family to different signaling pathways by association with the receptor cytoplasmic domain and kinases. This is TNF receptor-associated factor family protein DDB_G0273435/DDB_G0273505 from Dictyostelium discoideum (Social amoeba).